The sequence spans 1202 residues: Nucleolar protein 6 (1202 aa).

The interval methionine 1–lysine 64 is disordered.

It belongs to the NRAP family. In terms of assembly, part of the small subunit (SSU) processome, composed of more than 70 proteins and the RNA chaperone small nucleolar RNA (snoRNA) U3.

It is found in the nucleus. The protein localises to the nucleolus. The protein resides in the chromosome. In terms of biological role, part of the small subunit (SSU) processome, first precursor of the small eukaryotic ribosomal subunit. During the assembly of the SSU processome in the nucleolus, many ribosome biogenesis factors, an RNA chaperone and ribosomal proteins associate with the nascent pre-rRNA and work in concert to generate RNA folding, modifications, rearrangements and cleavage as well as targeted degradation of pre-ribosomal RNA by the RNA exosome. The polypeptide is Nucleolar protein 6 (Drosophila willistoni (Fruit fly)).